The sequence spans 437 residues: UDP-N-acetylmuramate--L-alanine ligase (437 aa).

ATP is bound at residue G114 to S120.

It belongs to the MurCDEF family.

The protein localises to the cytoplasm. The catalysed reaction is UDP-N-acetyl-alpha-D-muramate + L-alanine + ATP = UDP-N-acetyl-alpha-D-muramoyl-L-alanine + ADP + phosphate + H(+). The protein operates within cell wall biogenesis; peptidoglycan biosynthesis. In terms of biological role, cell wall formation. This is UDP-N-acetylmuramate--L-alanine ligase from Lactobacillus helveticus (strain DPC 4571).